The primary structure comprises 118 residues: Holo-[acyl-carrier-protein] synthase (118 aa).

The Mg(2+) site is built by D9 and E52.

Belongs to the P-Pant transferase superfamily. AcpS family. It depends on Mg(2+) as a cofactor.

The protein resides in the cytoplasm. The enzyme catalyses apo-[ACP] + CoA = holo-[ACP] + adenosine 3',5'-bisphosphate + H(+). In terms of biological role, transfers the 4'-phosphopantetheine moiety from coenzyme A to a Ser of acyl-carrier-protein. This chain is Holo-[acyl-carrier-protein] synthase, found in Frankia alni (strain DSM 45986 / CECT 9034 / ACN14a).